A 371-amino-acid polypeptide reads, in one-letter code: Flagellar P-ring protein (371 aa).

Residues 1–28 (MPARPTPPAVPLALALAAALAAPAPAAA) form the signal peptide.

Belongs to the FlgI family. As to quaternary structure, the basal body constitutes a major portion of the flagellar organelle and consists of four rings (L,P,S, and M) mounted on a central rod.

The protein resides in the periplasm. It is found in the bacterial flagellum basal body. Its function is as follows. Assembles around the rod to form the L-ring and probably protects the motor/basal body from shearing forces during rotation. This Anaeromyxobacter dehalogenans (strain 2CP-C) protein is Flagellar P-ring protein.